A 165-amino-acid chain; its full sequence is Nucleotide-binding protein Tfu_2672 (165 aa).

This sequence belongs to the YajQ family.

Nucleotide-binding protein. The protein is Nucleotide-binding protein Tfu_2672 of Thermobifida fusca (strain YX).